The sequence spans 653 residues: Poly [ADP-ribose] polymerase 2 (653 aa).

One can recognise an SAP 1 domain in the interval 2 to 36; that stretch reads SARLRVADVRAELQRRGLDVSGTKPALVRRLDAAI. The interval 64-84 is disordered; it reads NCGNNKRKRSGDGGEEGNGDT. The Nuclear localization signal motif lies at 69 to 72; that stretch reads KRKR. An SAP 2 domain is found at 91 to 125; the sequence is LEGMSYRELQGLAKARGVAANGGKKDVIQRLLSAT. The region spanning 179-276 is the WGR domain; that stretch reads NYHVLQVGDE…KNFKCYAKKY (98 aa). Residues 301–419 enclose the PARP alpha-helical domain; it reads ETKLETRIAQ…EIEIATKLLE (119 aa). A PARP catalytic domain is found at 427–653; the sequence is DPLYARYKQL…LHVNFNFKRR (227 aa).

The protein belongs to the ARTD/PARP family.

It is found in the nucleus. It catalyses the reaction NAD(+) + (ADP-D-ribosyl)n-acceptor = nicotinamide + (ADP-D-ribosyl)n+1-acceptor + H(+).. The enzyme catalyses L-aspartyl-[protein] + NAD(+) = 4-O-(ADP-D-ribosyl)-L-aspartyl-[protein] + nicotinamide. It carries out the reaction L-glutamyl-[protein] + NAD(+) = 5-O-(ADP-D-ribosyl)-L-glutamyl-[protein] + nicotinamide. Its function is as follows. Involved in the base excision repair (BER) pathway, by catalyzing the poly(ADP-ribosyl)ation of a limited number of acceptor proteins involved in chromatin architecture and in DNA metabolism. This modification follows DNA damages and appears as an obligatory step in a detection/signaling pathway leading to the reparation of DNA strand breaks. This Zea mays (Maize) protein is Poly [ADP-ribose] polymerase 2 (PARP2).